The primary structure comprises 491 residues: Trigger factor (491 aa).

Positions 169 to 254 constitute a PPIase FKBP-type domain; the sequence is GDRVTIDYLG…VKDVAAAAPI (86 aa). Residues 434 to 491 are disordered; sequence KVSKEELTAEDDADEKPAKKTASKKKAAAKADAAEGEEAAAPKRKAPAKKKASDESAE. Basic residues predominate over residues 452-461; that stretch reads KKTASKKKAA.

It belongs to the FKBP-type PPIase family. Tig subfamily.

The protein localises to the cytoplasm. It catalyses the reaction [protein]-peptidylproline (omega=180) = [protein]-peptidylproline (omega=0). Involved in protein export. Acts as a chaperone by maintaining the newly synthesized protein in an open conformation. Functions as a peptidyl-prolyl cis-trans isomerase. In Sinorhizobium medicae (strain WSM419) (Ensifer medicae), this protein is Trigger factor.